Here is a 743-residue protein sequence, read N- to C-terminus: Phosphoribosylformylglycinamidine synthase subunit PurL (743 aa).

The active site involves His54. 2 residues coordinate ATP: Tyr57 and Lys96. Glu98 provides a ligand contact to Mg(2+). Substrate-binding positions include 99 to 102 (SHNH) and Arg121. The active-site Proton acceptor is His100. Asp122 provides a ligand contact to Mg(2+). Gln245 is a binding site for substrate. Asp273 serves as a coordination point for Mg(2+). 317–319 (ESQ) lines the substrate pocket. Residues Asp501 and Gly538 each contribute to the ATP site. Mg(2+) is bound at residue Asn539. Ser541 is a binding site for substrate.

The protein belongs to the FGAMS family. In terms of assembly, monomer. Part of the FGAM synthase complex composed of 1 PurL, 1 PurQ and 2 PurS subunits.

It localises to the cytoplasm. It catalyses the reaction N(2)-formyl-N(1)-(5-phospho-beta-D-ribosyl)glycinamide + L-glutamine + ATP + H2O = 2-formamido-N(1)-(5-O-phospho-beta-D-ribosyl)acetamidine + L-glutamate + ADP + phosphate + H(+). Its pathway is purine metabolism; IMP biosynthesis via de novo pathway; 5-amino-1-(5-phospho-D-ribosyl)imidazole from N(2)-formyl-N(1)-(5-phospho-D-ribosyl)glycinamide: step 1/2. Its function is as follows. Part of the phosphoribosylformylglycinamidine synthase complex involved in the purines biosynthetic pathway. Catalyzes the ATP-dependent conversion of formylglycinamide ribonucleotide (FGAR) and glutamine to yield formylglycinamidine ribonucleotide (FGAM) and glutamate. The FGAM synthase complex is composed of three subunits. PurQ produces an ammonia molecule by converting glutamine to glutamate. PurL transfers the ammonia molecule to FGAR to form FGAM in an ATP-dependent manner. PurS interacts with PurQ and PurL and is thought to assist in the transfer of the ammonia molecule from PurQ to PurL. The polypeptide is Phosphoribosylformylglycinamidine synthase subunit PurL (Halalkalibacterium halodurans (strain ATCC BAA-125 / DSM 18197 / FERM 7344 / JCM 9153 / C-125) (Bacillus halodurans)).